The sequence spans 486 residues: MGKFVEKLEKAIKGYTFDDVLLIPQATEVEPKDVDVSTRITPNVKLNIPILSAAMDTVTEWEMAVAMAREGGLGVIHRNMGIEEQVEQVKRVKRAERLIVEDVITIAPDETVDFALFLMEKHGIDGLPVVEDEKVVGIITKKDIAAREGKLVKELMTKEVITVPESIEVEEALKIMIENRIDRLPVVDERGKLVGLITMSDLVARKKYKNAVRDENGELLVAAAVSPFDIKRAIELDKAGVDVIVVDTAHAHNLKAIKSMKEMRQKVDADFIVGNIANPKAVDDLTFADAVKVGIGPGSICTTRIVAGVGVPQITAVAMVADRAQEYGLYVIADGGIRYSGDIVKAIAAGADAVMLGNLLAGTKEAPGKEVIINGRKYKQYRGMGSLGAMMKGGAERYYQGGYMKTRKFVPEGVEGVVPYRGTVSEVLYQLVGGLKAGMGYVGARNIRELKEKGEFVIITHAGIKESHPHDIIITNEAPNYPLEKF.

CBS domains follow at residues 99-154 (IVED…LVKE) and 156-215 (MTKE…VRDE). NAD(+) contacts are provided by residues D247 and 294–296 (GIG). The K(+) site is built by G296 and G298. S299 serves as a coordination point for IMP. Residue C301 coordinates K(+). C301 (thioimidate intermediate) is an active-site residue. IMP is bound by residues 334–336 (DGG), 357–358 (GN), and 381–385 (YRGMG). R397 acts as the Proton acceptor in catalysis. E412 contacts IMP. The K(+) site is built by E466, S467, and H468.

This sequence belongs to the IMPDH/GMPR family. Homotetramer. K(+) is required as a cofactor.

The catalysed reaction is IMP + NAD(+) + H2O = XMP + NADH + H(+). It participates in purine metabolism; XMP biosynthesis via de novo pathway; XMP from IMP: step 1/1. Its activity is regulated as follows. Mycophenolic acid (MPA) is a non-competitive inhibitor that prevents formation of the closed enzyme conformation by binding to the same site as the amobile flap. In contrast, mizoribine monophosphate (MZP) is a competitive inhibitor that induces the closed conformation. MPA is a potent inhibitor of mammalian IMPDHs but a poor inhibitor of the bacterial enzymes. MZP is a more potent inhibitor of bacterial IMPDH. Catalyzes the conversion of inosine 5'-phosphate (IMP) to xanthosine 5'-phosphate (XMP), the first committed and rate-limiting step in the de novo synthesis of guanine nucleotides, and therefore plays an important role in the regulation of cell growth. The protein is Inosine-5'-monophosphate dehydrogenase of Pyrococcus horikoshii (strain ATCC 700860 / DSM 12428 / JCM 9974 / NBRC 100139 / OT-3).